The sequence spans 302 residues: Cyclopropane mycolic acid synthase 2 (302 aa).

S-adenosyl-L-methionine-binding positions include 41 to 42 (YS), 76 to 84 (LLDIGCGWG), 102 to 107 (TLSENQ), and 131 to 132 (WE). Cys-284 is a catalytic residue.

Belongs to the CFA/CMAS family. As to quaternary structure, homodimer.

Its subcellular location is the cytoplasm. The catalysed reaction is a 1-acyl-2-(9Z)-enoyl-sn-glycero-3-phospholipid + S-adenosyl-L-methionine = a 1-acyl-2-(9-cyclopronane)-acyl-sn-glycero-3-phospholipid + S-adenosyl-L-homocysteine + H(+). It functions in the pathway lipid metabolism; mycolic acid biosynthesis. In terms of biological role, catalyzes the formation of trans cyclopropanated ketomycolate or methoxymycolate through the conversion of a double bond to a cyclopropane ring at the proximal position of an oxygenated mycolic acid via the transfer of a methylene group from S-adenosyl-L-methionine. In the absence of MmaA2, CmaA2 has a non-specific cis-cyclopropanating activity and is able to catalyze the conversion of a double bond to a cis cyclopropane ring at the distal position of an alpha mycolic acid. Cyclopropanated mycolic acids are key factors participating in cell envelope permeability, host immunomodulation and persistence. The chain is Cyclopropane mycolic acid synthase 2 (cmaA2) from Mycobacterium bovis (strain ATCC BAA-935 / AF2122/97).